The primary structure comprises 1068 residues: Phosphatidylinositol 4,5-bisphosphate 3-kinase catalytic subunit alpha isoform (1068 aa).

Residues 16-105 (MPPRILVECL…QPFLKVIEPV (90 aa)) enclose the PI3K-ABD domain. A PI3K-RBD domain is found at 187–289 (KGQIIVVIWV…GRMPNLMLMA (103 aa)). The C2 PI3K-type domain maps to 330–487 (INSALRIKIL…DWFSSVVKFP (158 aa)). A PIK helical domain is found at 517 to 694 (LARDNELREN…GLLLESYCRA (178 aa)). The region spanning 765 to 1051 (RLEECRIMSS…QMNDAHHGGW (287 aa)) is the PI3K/PI4K catalytic domain. The G-loop stretch occupies residues 771-777 (IMSSAKR). Positions 912 to 920 (GIGDRHNSN) are catalytic loop. The segment at 931-957 (HIDFGHFLDHKKKKFGYKRERVPFVLT) is activation loop.

It belongs to the PI3/PI4-kinase family. In terms of assembly, heterodimer of a catalytic subunit PIK3CA and a p85 regulatory subunit (PIK3R1, PIK3R2 or PIK3R3). Interacts with IRS1 in nuclear extracts. Interacts with RUFY3. Interacts with RASD2. Interacts with APPL1. Interacts with HRAS and KRAS. Interaction with HRAS/KRAS is required for PI3K pathway signaling and cell proliferation stimulated by EGF and FGF2. Interacts with FAM83B; activates the PI3K/AKT signaling cascade.

The catalysed reaction is a 1,2-diacyl-sn-glycero-3-phospho-(1D-myo-inositol-4,5-bisphosphate) + ATP = a 1,2-diacyl-sn-glycero-3-phospho-(1D-myo-inositol-3,4,5-trisphosphate) + ADP + H(+). It catalyses the reaction a 1,2-diacyl-sn-glycero-3-phospho-(1D-myo-inositol) + ATP = a 1,2-diacyl-sn-glycero-3-phospho-(1D-myo-inositol-3-phosphate) + ADP + H(+). It carries out the reaction L-seryl-[protein] + ATP = O-phospho-L-seryl-[protein] + ADP + H(+). The enzyme catalyses 1,2-dioctanoyl-sn-glycero-3-phospho-(1D-myo-inositol-4,5-bisphosphate) + ATP = 1,2-dioctanoyl-sn-glycero-3-phospho-(1D-myo-inositol-3,4,5-trisphosphate) + ADP + H(+). The catalysed reaction is 1-octadecanoyl-2-(5Z,8Z,11Z,14Z)-eicosatetraenoyl-sn-glycero-3-phospho-1D-myo-inositol 4,5-bisphosphate + ATP = 1-octadecanoyl-2-(5Z,8Z,11Z,14Z-eicosatetraenoyl)-sn-glycero-3-phospho-(1D-myo-inositol 3,4,5-triphosphate) + ADP + H(+). Its pathway is phospholipid metabolism; phosphatidylinositol phosphate biosynthesis. Its function is as follows. Phosphoinositide-3-kinase (PI3K) phosphorylates phosphatidylinositol (PI) and its phosphorylated derivatives at position 3 of the inositol ring to produce 3-phosphoinositides. Uses ATP and PtdIns(4,5)P2 (phosphatidylinositol 4,5-bisphosphate) to generate phosphatidylinositol 3,4,5-trisphosphate (PIP3). PIP3 plays a key role by recruiting PH domain-containing proteins to the membrane, including AKT1 and PDPK1, activating signaling cascades involved in cell growth, survival, proliferation, motility and morphology. Participates in cellular signaling in response to various growth factors. Involved in the activation of AKT1 upon stimulation by receptor tyrosine kinases ligands such as EGF, insulin, IGF1, VEGFA and PDGF. Involved in signaling via insulin-receptor substrate (IRS) proteins. Essential in endothelial cell migration during vascular development through VEGFA signaling, possibly by regulating RhoA activity. Required for lymphatic vasculature development, possibly by binding to RAS and by activation by EGF and FGF2, but not by PDGF. Regulates invadopodia formation through the PDPK1-AKT1 pathway. Participates in cardiomyogenesis in embryonic stem cells through a AKT1 pathway. Participates in vasculogenesis in embryonic stem cells through PDK1 and protein kinase C pathway. In addition to its lipid kinase activity, it displays a serine-protein kinase activity that results in the autophosphorylation of the p85alpha regulatory subunit as well as phosphorylation of other proteins such as 4EBP1, H-Ras, the IL-3 beta c receptor and possibly others. Plays a role in the positive regulation of phagocytosis and pinocytosis. The sequence is that of Phosphatidylinositol 4,5-bisphosphate 3-kinase catalytic subunit alpha isoform (PIK3CA) from Homo sapiens (Human).